The chain runs to 341 residues: S-adenosylmethionine:tRNA ribosyltransferase-isomerase (341 aa).

The protein belongs to the QueA family. Monomer.

It localises to the cytoplasm. It carries out the reaction 7-aminomethyl-7-carbaguanosine(34) in tRNA + S-adenosyl-L-methionine = epoxyqueuosine(34) in tRNA + adenine + L-methionine + 2 H(+). The protein operates within tRNA modification; tRNA-queuosine biosynthesis. Transfers and isomerizes the ribose moiety from AdoMet to the 7-aminomethyl group of 7-deazaguanine (preQ1-tRNA) to give epoxyqueuosine (oQ-tRNA). The protein is S-adenosylmethionine:tRNA ribosyltransferase-isomerase of Clostridium botulinum (strain Langeland / NCTC 10281 / Type F).